Reading from the N-terminus, the 294-residue chain is Decaprenyl-diphosphate synthase subunit 2 (294 aa).

It belongs to the FPP/GGPP synthase family. As to quaternary structure, heterotetramer of 2 dps1 and 2 dlp1 subunits.

It localises to the mitochondrion. It carries out the reaction 7 isopentenyl diphosphate + (2E,6E)-farnesyl diphosphate = all-trans-decaprenyl diphosphate + 7 diphosphate. Its pathway is cofactor biosynthesis; ubiquinone biosynthesis. Its function is as follows. Supplies decaprenyl diphosphate, the precursor for the side chain of the isoprenoid quinones ubiquinone-10. The protein is Decaprenyl-diphosphate synthase subunit 2 (dlp1) of Schizosaccharomyces pombe (strain 972 / ATCC 24843) (Fission yeast).